Here is a 415-residue protein sequence, read N- to C-terminus: Protrudin (415 aa).

The segment at 1 to 24 (MQTSDRDLSGPEASPSGMPEVLSE) is disordered. Over 1 to 66 (MQTSDRDLSG…AGDGVRYLLR (66 aa)) the chain is Cytoplasmic. A sufficient for homooligomerization region spans residues 1 to 92 (MQTSDRDLSG…LFLTLNEGAW (92 aa)). The segment at 1-210 (MQTSDRDLSG…LYLLPLCWVL (210 aa)) is sufficient for localization to endoplasmic reticulum tubular network and for interactions with REEP1, REEP5, ATL1, ATL2, ATL3 and SPAST. Residues 51–64 (LEPLKDAGDGVRYL) are necessary for interaction with RAB11A and function in neurite outgrowth. Residues 67-87 (WQMPLCSLLTCLGLNILFLTL) form a helical membrane-spanning segment. Asn88 is a topological domain (lumenal). Residues 89–109 (EGAWYSMGALMISVPALLGYL) form a helical membrane-spanning segment. Residues 110–192 (QEVCRGQLPE…NPVVSSQFYG (83 aa)) are Cytoplasmic-facing. The helical intramembrane region spans 193 to 213 (ALLGMVCMLYLLPLCWVLALL). The Cytoplasmic segment spans residues 214 to 415 (NSTLFLGNGD…CASCNQTLSK (202 aa)). The tract at residues 254–290 (QGAGGRGLLDSSPAPTPTEDLTPGSVEEAEEAEPDEE) is disordered. Residues 275–365 (TPGSVEEAEE…GCAATFSVLK (91 aa)) form a necessary for interaction with KIF5A region. Over residues 280-290 (EEAEEAEPDEE) the composition is skewed to acidic residues. The segment at 290–296 (EFKDAIE) is necessary for interaction with VAPA. An FYVE-type zinc finger spans residues 348-414 (TNNFGNCAGC…VCASCNQTLS (67 aa)). The Zn(2+) site is built by Cys354, Cys357, Cys370, Cys373, Cys378, Cys381, Cys406, and Cys409.

In terms of assembly, can form homooligomers (monomers, dimers and tetramers). Interacts with RAB11A (GDP-bound form); regulates RAB11A. Interacts with FKBP8; may negatively regulate ZFYVE27 phosphorylation. Isoform 1 interacts to a greater extent than isoform 2 with VAPB (via MSP domain). Isoform 1 interacts to a greater extent than isoform 2 with VAPA (via MSP domain). Interaction with VAPA may regulate ZFYVE27 retention in the endoplasmic reticulum and its function in cell projections formation. Interacts with ATL2, ATL3, SPAST and RTN3. Interacts with REEP1, REEP5 and ATL1. Interacts with RAB11B (GDP-bound form), SURF4, KIF5B and KIF5C. Isoform 1 and 2 interact with KIFA. In terms of processing, phosphorylated. Phosphorylation is induced by NGF through the MAPK/ERK pathway and modulates interaction with RAB11A. Astrocytes express both isoform 1 and isoform 2 and oligodendrocytes express only isoform 2 (at protein level). Isoform 1 is expressed specifically in the central nervous system and selectively in neuronal cells. Isoform 2 is expressed in cerebrum, cerebellum, spinal cord, heart, thymus, spleen, intestine and lung.

Its subcellular location is the recycling endosome membrane. It localises to the endoplasmic reticulum membrane. The protein resides in the cell projection. The protein localises to the growth cone membrane. Key regulator of RAB11-dependent vesicular trafficking during neurite extension through polarized membrane transport. Promotes axonal elongation and contributes to the establishment of neuronal cell polarity. Involved in nerve growth factor-induced neurite formation in VAPA-dependent manner. Contributes to both the formation and stabilization of the tubular ER network. Involved in ER morphogenesis by regulating the sheet-to-tubule balance and possibly the density of tubule interconnections. Acts as an adapter protein that facilitates the interaction of KIF5A with VAPA, VAPB, SURF4, RAB11A, RAB11B and RTN3 and the ZFYVE27-KIF5A complex contributes to the transport of these proteins in neurons. Can induce formation of neurite-like membrane protrusions in non-neuronal cells in a KIF5A/B-dependent manner. The polypeptide is Protrudin (Zfyve27) (Mus musculus (Mouse)).